The chain runs to 312 residues: Large ribosomal subunit protein uL10 (312 aa).

Lys14 is covalently cross-linked (Glycyl lysine isopeptide (Lys-Gly) (interchain with G-Cter in ubiquitin)). At Ser68 the chain carries Phosphoserine. Glycyl lysine isopeptide (Lys-Gly) (interchain with G-Cter in ubiquitin) cross-links involve residues Lys97 and Lys144. Positions 199–230 (SSILDITDEELVSHFVSAVSTIASISLAIGYP) are interaction with P1A-P2B. The tract at residues 231 to 258 (TLPSVGHTLINNYKDLLAVAIAASYHYP) is interaction with P1B-P2A. The span at 278 to 293 (PAATSAASGDAAPAEE) shows a compositional bias: low complexity. A disordered region spans residues 278–312 (PAATSAASGDAAPAEEAAAEEEEESDDDMGFGLFD). Residues 294 to 306 (AAAEEEEESDDDM) are compositionally biased toward acidic residues. Phosphoserine; by CK2 is present on Ser302.

The protein belongs to the universal ribosomal protein uL10 family. Component of the large ribosomal subunit (LSU). Mature yeast ribosomes consist of a small (40S) and a large (60S) subunit. The 40S small subunit contains 1 molecule of ribosomal RNA (18S rRNA) and 33 different proteins (encoded by 57 genes). The large 60S subunit contains 3 rRNA molecules (25S, 5.8S and 5S rRNA) and 46 different proteins (encoded by 81 genes). The 5 acidic ribosomal P-proteins form the stalk structure of the 60S subunit. They are organized as a pentameric complex in which uL10/P0 interacts with 2 heterodimers, P1A-P2B and P1B-P2A. uL10 directly interacts with 28S rRNA. uL10 interacts with YFL034W.

The protein localises to the cytoplasm. Component of the ribosome, a large ribonucleoprotein complex responsible for the synthesis of proteins in the cell. The small ribosomal subunit (SSU) binds messenger RNAs (mRNAs) and translates the encoded message by selecting cognate aminoacyl-transfer RNA (tRNA) molecules. The large subunit (LSU) contains the ribosomal catalytic site termed the peptidyl transferase center (PTC), which catalyzes the formation of peptide bonds, thereby polymerizing the amino acids delivered by tRNAs into a polypeptide chain. The nascent polypeptides leave the ribosome through a tunnel in the LSU and interact with protein factors that function in enzymatic processing, targeting, and the membrane insertion of nascent chains at the exit of the ribosomal tunnel. uL10 forms part of the P stalk that participates in recruiting G proteins to the ribosome. The sequence is that of Large ribosomal subunit protein uL10 from Saccharomyces cerevisiae (strain ATCC 204508 / S288c) (Baker's yeast).